A 559-amino-acid chain; its full sequence is GTP diphosphokinase CRSH2, chloroplastic (559 aa).

The transit peptide at 1–37 (MASAGGEVVVVDPAAAAVAPDVEHHAPAPRLTPAGSG) directs the protein to the chloroplast. The 101-residue stretch at 87–187 (SLARALIVAA…LELAIRLDAM (101 aa)) folds into the HD domain. EF-hand domains follow at residues 449–484 (ASAG…LGAG) and 486–518 (KDAE…VELK). The Ca(2+) site is built by Asp-462, Asn-464, Asp-466, Arg-468, Glu-473, Asp-496, Asn-498, Asp-500, Ser-502, and Glu-507.

Belongs to the RelA/SpoT family. As to expression, expressed in shoots.

The protein localises to the plastid. The protein resides in the chloroplast. The catalysed reaction is GTP + ATP = guanosine 3'-diphosphate 5'-triphosphate + AMP. Activated by calcium. Possesses calcium-dependent ppGpp (guanosine 3'-diphosphate 5'-diphosphate) synthetase activity in vitro and is able to functionally complement E.coli relA mutants. May be involved in a rapid plant ppGpp-mediated response to pathogens and other stresses. The protein is GTP diphosphokinase CRSH2, chloroplastic of Oryza sativa subsp. japonica (Rice).